The following is an 886-amino-acid chain: Protein translocase subunit SecA (886 aa).

Residues glutamine 81, 99 to 103 (GEGKT), and aspartate 489 contribute to the ATP site.

The protein belongs to the SecA family.

It localises to the plastid. The protein localises to the chloroplast stroma. It is found in the chloroplast thylakoid membrane. It catalyses the reaction ATP + H2O + cellular proteinSide 1 = ADP + phosphate + cellular proteinSide 2.. Has a central role in coupling the hydrolysis of ATP to the transfer of proteins across the thylakoid membrane. The sequence is that of Protein translocase subunit SecA from Phaeodactylum tricornutum (strain CCAP 1055/1).